The sequence spans 299 residues: MKPVILSGPVLKERTTLRLGGQALAEVRLDDMHAFDGLPRVLERLGGTPAVLGRGSNILARDGELPLVIINPALKAEPEAWADPQAEDRVLVRVAAGVRLPVLLGRLAAQGLSGLEGLAGVPGTVGGAVAMNAGSYGNDMGSVLSSVEIFSAGTGMICVPRSQCRCEYRHFSVPAAGGWFVVAAVTLQLRRSTATAVRDAMRSNALLKKKTQPVTEHSAGCVFKNPADGISAGRLLDQCGFRGRGKGGMAFSSLHANFLVNKAQGTSDDAMDLINDARHAVERATGHYLELEVKIWPWQ.

The region spanning 19–192 (LGGQALAEVR…AAVTLQLRRS (174 aa)) is the FAD-binding PCMH-type domain. The active site involves arginine 169. The active-site Proton donor is cysteine 221. Residue glutamate 292 is part of the active site.

Belongs to the MurB family. Requires FAD as cofactor.

The protein resides in the cytoplasm. It carries out the reaction UDP-N-acetyl-alpha-D-muramate + NADP(+) = UDP-N-acetyl-3-O-(1-carboxyvinyl)-alpha-D-glucosamine + NADPH + H(+). Its pathway is cell wall biogenesis; peptidoglycan biosynthesis. Functionally, cell wall formation. The polypeptide is UDP-N-acetylenolpyruvoylglucosamine reductase (Oleidesulfovibrio alaskensis (strain ATCC BAA-1058 / DSM 17464 / G20) (Desulfovibrio alaskensis)).